A 138-amino-acid polypeptide reads, in one-letter code: Ergosterol biosynthetic protein 28 (138 aa).

A helical transmembrane segment spans residues Leu17 to Val33. N-linked (GlcNAc...) asparagine glycosylation occurs at Asn40. Helical transmembrane passes span Leu56–Gly75, Leu87–Gly107, and Gly114–Leu131.

This sequence belongs to the ERG28 family. Heterotetramer of ERG25, ERG26, ERG27 and ERG28. ERG28 acts as a scaffold to tether ERG27 and other 4,4-demethylation-related enzymes, forming a demethylation enzyme complex, in the endoplasmic reticulum. Interacts with ERG25, ERG26 and ERG27. Also interacts with ERG1, ERG3, ERG5, ERG6 and ERG11.

Its subcellular location is the endoplasmic reticulum membrane. Part of the third module of ergosterol biosynthesis pathway that includes the late steps of the pathway. ERG28 has a role as a scaffold to help anchor the catalytic components of the C-4 demethylation complex ERG25, ERG26 and ERG27 to the endoplasmic reticulum. The third module or late pathway involves the ergosterol synthesis itself through consecutive reactions that mainly occur in the endoplasmic reticulum (ER) membrane. Firstly, the squalene synthase ERG9 catalyzes the condensation of 2 farnesyl pyrophosphate moieties to form squalene, which is the precursor of all steroids. Squalene synthase is crucial for balancing the incorporation of farnesyl diphosphate (FPP) into sterol and nonsterol isoprene synthesis. Secondly, the squalene epoxidase ERG1 catalyzes the stereospecific oxidation of squalene to (S)-2,3-epoxysqualene, which is considered to be a rate-limiting enzyme in steroid biosynthesis. Then, the lanosterol synthase ERG7 catalyzes the cyclization of (S)-2,3 oxidosqualene to lanosterol, a reaction that forms the sterol core. In the next steps, lanosterol is transformed to zymosterol through a complex process involving various demethylation, reduction and desaturation reactions. The lanosterol 14-alpha-demethylase ERG11 (also known as CYP51) catalyzes C14-demethylation of lanosterol to produce 4,4'-dimethyl cholesta-8,14,24-triene-3-beta-ol, which is critical for ergosterol biosynthesis. The C-14 reductase ERG24 reduces the C14=C15 double bond of 4,4-dimethyl-cholesta-8,14,24-trienol to produce 4,4-dimethyl-cholesta-8,24-dienol. 4,4-dimethyl-cholesta-8,24-dienol is substrate of the C-4 demethylation complex ERG25-ERG26-ERG27 in which ERG25 catalyzes the three-step monooxygenation required for the demethylation of 4,4-dimethyl and 4alpha-methylsterols, ERG26 catalyzes the oxidative decarboxylation that results in a reduction of the 3-beta-hydroxy group at the C-3 carbon to an oxo group, and ERG27 is responsible for the reduction of the keto group on the C-3. ERG28 has a role as a scaffold to help anchor ERG25, ERG26 and ERG27 to the endoplasmic reticulum and ERG29 regulates the activity of the iron-containing C4-methylsterol oxidase ERG25. Then, the sterol 24-C-methyltransferase ERG6 catalyzes the methyl transfer from S-adenosyl-methionine to the C-24 of zymosterol to form fecosterol. The C-8 sterol isomerase ERG2 catalyzes the reaction which results in unsaturation at C-7 in the B ring of sterols and thus converts fecosterol to episterol. The sterol-C5-desaturase ERG3 then catalyzes the introduction of a C-5 double bond in the B ring to produce 5-dehydroepisterol. The C-22 sterol desaturase ERG5 further converts 5-dehydroepisterol into ergosta-5,7,22,24(28)-tetraen-3beta-ol by forming the C-22(23) double bond in the sterol side chain. Finally, ergosta-5,7,22,24(28)-tetraen-3beta-ol is substrate of the C-24(28) sterol reductase ERG4 to produce ergosterol. The protein is Ergosterol biosynthetic protein 28 of Candida albicans (strain SC5314 / ATCC MYA-2876) (Yeast).